We begin with the raw amino-acid sequence, 344 residues long: Sorting nexin-16 (344 aa).

Over residues 1–10 (MATPYVPVPM) the composition is skewed to pro residues. 2 disordered regions span residues 1–66 (MATP…NTSS) and 81–107 (ASSI…EDRP). Over residues 14–26 (NSASSFTTNRNQR) the composition is skewed to polar residues. The segment covering 27-40 (SSSFGSVSTSSNSS) has biased composition (low complexity). A compositionally biased stretch (polar residues) spans 41 to 66 (KGQLEDSNMGNFKQTSVPDQMDNTSS). Residues 105–218 (DRPSTPTILG…EFLCLDDPPG (114 aa)) form the PX domain. Residues R144, T146, and R184 each coordinate a 1,2-diacyl-sn-glycero-3-phospho-(1D-myo-inositol-3-phosphate). The residue at position 222 (S222) is a Phosphoserine. Residues 223 to 278 (LEESRAFCETLEETNYRLQKELLEKQKEMESLKKLLSEKQLHIDTLENRIRTLSLE) are a coiled coil.

It belongs to the sorting nexin family. Homooligomer. Interacts with EGFR. As to expression, detected in placenta, lung, liver,heart and pancreas.

It is found in the early endosome membrane. It localises to the late endosome membrane. The protein resides in the cytoplasm. The protein localises to the lysosome. Functionally, may be involved in several stages of intracellular trafficking. Plays a role in protein transport from early to late endosomes. Plays a role in protein transport to the lysosome. Promotes degradation of EGFR after EGF signaling. Plays a role in intracellular transport of vesicular stomatitis virus nucleocapsids from the endosome to the cytoplasm. The protein is Sorting nexin-16 (SNX16) of Homo sapiens (Human).